Consider the following 652-residue polypeptide: Carboxypeptidase S1 homolog A (652 aa).

Positions 1–19 (MRLAASIAVALPVIGAASA) are cleaved as a signal peptide. C50 and C121 are joined by a disulfide. N-linked (GlcNAc...) asparagine glycosylation is found at N77, N132, N161, N168, N184, and N202. The active site involves S238. 4 N-linked (GlcNAc...) asparagine glycosylation sites follow: N260, N299, N347, and N410. 2 disulfides stabilise this stretch: C325-C361 and C332-C354. D458 is an active-site residue. A substrate-binding site is contributed by C461. N474, N492, and N505 each carry an N-linked (GlcNAc...) asparagine glycan. H516 is an active-site residue. E517 is a binding site for substrate. N594 carries an N-linked (GlcNAc...) asparagine glycan. Positions 608 to 628 (AASKGNPPPTTTSSPTASPTA) are disordered. Over residues 618-628 (TTSSPTASPTA) the composition is skewed to low complexity. The GPI-anchor amidated glycine moiety is linked to residue G629. A propeptide spans 630 to 652 (SAMLKAPVAMLAISALTVLAFYL) (removed in mature form).

The protein belongs to the peptidase S10 family.

Its subcellular location is the cell membrane. It catalyses the reaction Preferential release of a C-terminal arginine or lysine residue.. Functionally, extracellular serine carboxypeptidase that contributes to pathogenicity. The polypeptide is Carboxypeptidase S1 homolog A (SCPA) (Arthroderma benhamiae (strain ATCC MYA-4681 / CBS 112371) (Trichophyton mentagrophytes)).